The sequence spans 348 residues: MTQNLVTKPFLEVLSGNRQASPPMWMMRQAGRYLPEYREVRAKAGGFLDLCFNAEFAAEVTLQPIRRFGFDAAIIFSDILVVPYALGRSVRFEVGEGPRLDPLDSPDKVSTLTKAIDLSKLQAVFDALRITRRELPPETTLIGFCGSPFTVATYMVAGHGTPDQAPARNMAYQHPGAFAKIIDVLVESSIQYLLAQLEAGAEVLQIFDTWAGVLPPREFERWSIEPTRRIVEGVRKVKPGTKIIGFPRGAGAMLPAFVERTGVDGVSIDWTAEPSFVREKVQSKVVVQGNLDPLVLIAGGAALDEAVDDVLKNFSGGRHIFNLGHGIQPETPIAHVEQMLKRVRAFKG.

Residues 28–32 (RQAGR), Asp78, Tyr154, Thr209, and His325 contribute to the substrate site.

Belongs to the uroporphyrinogen decarboxylase family. Homodimer.

It is found in the cytoplasm. It catalyses the reaction uroporphyrinogen III + 4 H(+) = coproporphyrinogen III + 4 CO2. The protein operates within porphyrin-containing compound metabolism; protoporphyrin-IX biosynthesis; coproporphyrinogen-III from 5-aminolevulinate: step 4/4. Catalyzes the decarboxylation of four acetate groups of uroporphyrinogen-III to yield coproporphyrinogen-III. In Rhodopseudomonas palustris (strain BisA53), this protein is Uroporphyrinogen decarboxylase.